The following is a 61-amino-acid chain: Transmembrane protein 300R (61 aa).

2 helical membrane-spanning segments follow: residues phenylalanine 5–threonine 25 and serine 35–glutamine 55.

It is found in the membrane. This chain is Transmembrane protein 300R, found in Invertebrate iridescent virus 6 (IIV-6).